Here is a 139-residue protein sequence, read N- to C-terminus: MTRFEFFDHTADIGIIAYGRSLEEAFESAALAVFEVMTDTSKIEYKVEVEIEEIGSDLENLLYRWIESLLVYYDSDLLLFGKFKVSIDLNNMTLKGKAYGEKFNPEKHERRTVVKAMTYHEMLISQNDGTYILRFVVDI.

Ca(2+)-binding residues include D12, D138, and I139.

This sequence belongs to the archease family.

In terms of biological role, activates the tRNA-splicing ligase complex by facilitating the enzymatic turnover of catalytic subunit RtcB. Acts by promoting the guanylylation of RtcB, a key intermediate step in tRNA ligation. Can also alter the NTP specificity of RtcB such that ATP, dGTP or ITP is used efficiently. The sequence is that of Protein archease from Sulfolobus acidocaldarius (strain ATCC 33909 / DSM 639 / JCM 8929 / NBRC 15157 / NCIMB 11770).